We begin with the raw amino-acid sequence, 67 residues long: MRLLVCLVFLASFAMVCQGHSSGYTRPLRKPSRPIFIRPIGCDVCYGIPSSTARLCCFRYGDCCHLG.

An N-terminal signal peptide occupies residues 1–19; it reads MRLLVCLVFLASFAMVCQG. 3 disulfides stabilise this stretch: C42–C56, C45–C63, and C57–C64. At L66 the chain carries Leucine amide.

The protein belongs to the penaeidin family.

It localises to the cytoplasmic granule. Its function is as follows. Antibacterial and antifungal activity. Presents chitin-binding activity. This is Penaeidin-4d from Penaeus setiferus (Atlantic white shrimp).